Reading from the N-terminus, the 270-residue chain is 2-dehydro-3-deoxyphosphooctonate aldolase (270 aa).

Belongs to the KdsA family.

Its subcellular location is the cytoplasm. The catalysed reaction is D-arabinose 5-phosphate + phosphoenolpyruvate + H2O = 3-deoxy-alpha-D-manno-2-octulosonate-8-phosphate + phosphate. Its pathway is carbohydrate biosynthesis; 3-deoxy-D-manno-octulosonate biosynthesis; 3-deoxy-D-manno-octulosonate from D-ribulose 5-phosphate: step 2/3. The protein operates within bacterial outer membrane biogenesis; lipopolysaccharide biosynthesis. The chain is 2-dehydro-3-deoxyphosphooctonate aldolase from Helicobacter hepaticus (strain ATCC 51449 / 3B1).